Consider the following 189-residue polypeptide: Elongation factor P (189 aa).

The protein belongs to the elongation factor P family.

It localises to the cytoplasm. The protein operates within protein biosynthesis; polypeptide chain elongation. Involved in peptide bond synthesis. Stimulates efficient translation and peptide-bond synthesis on native or reconstituted 70S ribosomes in vitro. Probably functions indirectly by altering the affinity of the ribosome for aminoacyl-tRNA, thus increasing their reactivity as acceptors for peptidyl transferase. The sequence is that of Elongation factor P from Phytoplasma australiense.